The following is a 266-amino-acid chain: MKFAVSSKGDQVSDTLKSKIQAYLLDFDMELDENEPEIVISVGGDGTLLYAFHRYSDRLDKTAFVGVHTGHLGFYADWVPHEIEKLVLAIAKTPYHTVEYPLLEVIVTYHENEREERYLALNECTIKSIEGSLVADVEIKGQLFETFRGDGLCLSTPSGSTAYNKALGGAIIHPSIRAIQLAEMASINNRVFRTVGSPLLLPSHHDCMIKPRNEVDFQVTIDHLTLLHKDVKSIRCQVASEKVRFARFRPFPFWKRVQDSFIGKGE.

D45 functions as the Proton acceptor in the catalytic mechanism. NAD(+) contacts are provided by residues 45–46 (DG), 122–123 (NE), and R148. D150 lines the ATP pocket. Residues S158 and 161–166 (TAYNKA) each bind NAD(+).

Belongs to the NAD kinase family. As to quaternary structure, homodimer. It depends on Ca(2+) as a cofactor. Requires Mn(2+) as cofactor.

It is found in the cytoplasm. The catalysed reaction is NAD(+) + ATP = ADP + NADP(+) + H(+). Its activity is regulated as follows. Allosterically inhibited by NADP and activated by quinolinic acid. Strongly inhibited by HgCl(2). In terms of biological role, involved in the regulation of the intracellular balance of NAD and NADP, and is a key enzyme in the biosynthesis of NADP. Catalyzes specifically the phosphorylation on 2'-hydroxyl of the adenosine moiety of NAD to yield NADP. It can use ATP and other nucleoside triphosphates (GTP, UTP) as well as inorganic polyphosphate (poly(P)) as a source of phosphorus. This chain is NAD kinase 1 (ppnKA), found in Bacillus subtilis (strain 168).